The primary structure comprises 339 residues: Ribosomal RNA large subunit methyltransferase F (339 aa).

The tract at residues 1–26 is disordered; it reads MTAPSTPKPQRKKPKTATTAKPVVPR.

It belongs to the methyltransferase superfamily. METTL16/RlmF family.

The protein resides in the cytoplasm. It carries out the reaction adenosine(1618) in 23S rRNA + S-adenosyl-L-methionine = N(6)-methyladenosine(1618) in 23S rRNA + S-adenosyl-L-homocysteine + H(+). Its function is as follows. Specifically methylates the adenine in position 1618 of 23S rRNA. The polypeptide is Ribosomal RNA large subunit methyltransferase F (Pseudomonas fluorescens (strain SBW25)).